An 88-amino-acid chain; its full sequence is UPF0297 protein RBAM_024500 (88 aa).

Belongs to the UPF0297 family.

The chain is UPF0297 protein RBAM_024500 from Bacillus velezensis (strain DSM 23117 / BGSC 10A6 / LMG 26770 / FZB42) (Bacillus amyloliquefaciens subsp. plantarum).